Consider the following 257-residue polypeptide: MVLIRVLANLLILQLSYAQKSSELVIGGDECNINEHPFLVLVYYDDYQCGGTLLNEEWVLTAAHCNGKDMEIYLGVHSKKVPNKDVQRRVPKEKFFCDSSKTYTKWNKDIMLIRLDRPVRKSAHIAPLSLPSSPPSVGSVCRVMGWGTITSPQETYPDVPHCANINLLDYEVCRAAYAGLPATSRTLCAGILEGGKDSCVGDSGGPLICNGQFQGIVSWGGDPCAQPREPGVYTNVFDHLDWIKGIIAGNTDVTCPL.

Positions 1 to 18 are cleaved as a signal peptide; it reads MVLIRVLANLLILQLSYA. The propeptide occupies 19 to 24; the sequence is QKSSEL. Residues 25 to 248 enclose the Peptidase S1 domain; sequence VIGGDECNIN…HLDWIKGIIA (224 aa). Disulfide bonds link C31–C162, C49–C65, C97–C255, C141–C209, C173–C188, and C199–C224. Residues H64 and D109 each act as charge relay system in the active site. Residue S203 is the Charge relay system of the active site.

Belongs to the peptidase S1 family. Snake venom subfamily. In terms of assembly, monomer. Expressed by the venom gland.

Its subcellular location is the secreted. Snake venom serine protease with fibrinogenolytic activities. Cleaves beta-chain of fibrinogen (FGB) efficiently and shows relatively lower activity on alpha-chain. The sequence is that of Beta-fibrinogenase mucrofibrase-3 from Protobothrops mucrosquamatus (Taiwan habu).